A 206-amino-acid polypeptide reads, in one-letter code: Cytochrome c biogenesis ATP-binding export protein CcmA (206 aa).

The 205-residue stretch at 2–206 (LEARDVVCIR…IQLTPSEGTP (205 aa)) folds into the ABC transporter domain. 34-41 (GANGVGKT) is a binding site for ATP.

Belongs to the ABC transporter superfamily. CcmA exporter (TC 3.A.1.107) family. The complex is composed of two ATP-binding proteins (CcmA) and two transmembrane proteins (CcmB).

It is found in the cell inner membrane. The enzyme catalyses heme b(in) + ATP + H2O = heme b(out) + ADP + phosphate + H(+). In terms of biological role, part of the ABC transporter complex CcmAB involved in the biogenesis of c-type cytochromes; once thought to export heme, this seems not to be the case, but its exact role is uncertain. Responsible for energy coupling to the transport system. The chain is Cytochrome c biogenesis ATP-binding export protein CcmA from Pectobacterium atrosepticum (strain SCRI 1043 / ATCC BAA-672) (Erwinia carotovora subsp. atroseptica).